A 514-amino-acid polypeptide reads, in one-letter code: Maltose/maltodextrin transport system permease protein MalF (514 aa).

The Cytoplasmic segment spans residues 1–16 (MDVIKKKHWWQSDALK). Residues 17 to 36 (WSVLGLLGLLVGYLVVLMYA) form a helical membrane-spanning segment. At 37-39 (QGE) the chain is on the periplasmic side. Residues 40–58 (YLFAITTLILSSAGLYIFA) traverse the membrane as a helical segment. The Cytoplasmic portion of the chain corresponds to 59 to 66 (NRKAYAWR). Residues 67–92 (YVYPGMAGMGLFVLFPLVCTIAIAFT) traverse the membrane as a helical segment. At 93-275 (NYSSTNQLTF…RVFTDEGIQK (183 aa)) the chain is on the periplasmic side. Residues 276 to 306 (PFLAIFVWTVVFSLITVFLTVAVGMVLACLV) form a helical membrane-spanning segment. The 225-residue stretch at 281–505 (FVWTVVFSLI…LLVGALAIVN (225 aa)) folds into the ABC transmembrane type-1 domain. Topologically, residues 307–318 (QWEALRGKAVYR) are cytoplasmic. The helical transmembrane segment at 319-336 (VLLILPYAVPSFISILIF) threads the bilayer. The Periplasmic segment spans residues 337–369 (KGLFNQSFGEINMMLSALFGVKPAWFSDPTTAR). Residues 370 to 392 (TMLIIVNTWLGYPYMMILCMGLL) traverse the membrane as a helical segment. At 393 to 425 (KAIPDDLYEASAMDGAGPFQNFFKITLPLLIKP) the chain is on the cytoplasmic side. The chain crosses the membrane as a helical span at residues 426–452 (LTPLMIASFAFNFNNFVLIQLLTNGGP). At 453 to 483 (DRLGTTTPAGYTDLLVNYTYRIAFEGGGGQD) the chain is on the periplasmic side. A helical membrane pass occupies residues 484 to 505 (FGLAAAIATLIFLLVGALAIVN). Over 506–514 (LKATRMKFD) the chain is Cytoplasmic.

It belongs to the binding-protein-dependent transport system permease family. MalFG subfamily. In terms of assembly, the complex is composed of two ATP-binding proteins (MalK), two transmembrane proteins (MalG and MalF) and a solute-binding protein (MalE). Protein stability and stable complex formation require YidC.

The protein resides in the cell inner membrane. Part of the ABC transporter complex MalEFGK involved in maltose/maltodextrin import. Probably responsible for the translocation of the substrate across the membrane. The polypeptide is Maltose/maltodextrin transport system permease protein MalF (Escherichia coli (strain K12)).